A 267-amino-acid polypeptide reads, in one-letter code: Thiamine thiazole synthase (267 aa).

Residues S41, E60 to R61, G68, V132, and H160 to D162 contribute to the NAD(+) site. Positions 162 and 177 each coordinate Fe cation. Residue M227 participates in NAD(+) binding. Position 237 (R237) interacts with glycine.

Belongs to the THI4 family. In terms of assembly, homooctamer; tetramer of dimers. It depends on Fe(2+) as a cofactor.

The catalysed reaction is hydrogen sulfide + glycine + NAD(+) = ADP-5-ethyl-4-methylthiazole-2-carboxylate + nicotinamide + 3 H2O + H(+). Its pathway is cofactor biosynthesis; thiamine diphosphate biosynthesis. Functionally, involved in the biosynthesis of the thiazole moiety of thiamine. Catalyzes the conversion of NAD and glycine to adenosine diphosphate 5-(2-hydroxyethyl)-4-methylthiazole-2-carboxylate (ADT), an adenylated thiazole intermediate, using free sulfide as a source of sulfur. In Saccharolobus islandicus (strain Y.N.15.51 / Yellowstone #2) (Sulfolobus islandicus), this protein is Thiamine thiazole synthase.